The chain runs to 229 residues: Juvenile hormone-binding protein (229 aa).

An N-terminal signal peptide occupies residues 1–3 (VLS).

The protein localises to the secreted. Prevents juvenile hormone from being hydrolyzed by general esterases by combining with it specifically. The polypeptide is Juvenile hormone-binding protein (JHBP) (Manduca sexta (Tobacco hawkmoth)).